Here is a 342-residue protein sequence, read N- to C-terminus: Cytosolic Fe-S cluster assembly factor NBP35 (342 aa).

Residues 1–45 form a disordered region; the sequence is MGPSLETPEPVEDVLANPLKQKPQLVAPEPEHCPGPESEQAGTAD. [4Fe-4S] cluster is bound by residues cysteine 33, cysteine 47, cysteine 50, and cysteine 56. 86-93 provides a ligand contact to ATP; that stretch reads GKGGVGKS. The [4Fe-4S] cluster site is built by cysteine 259 and cysteine 262.

It belongs to the Mrp/NBP35 ATP-binding proteins family. NUBP1/NBP35 subfamily. Heterotetramer of 2 NBP35 and 2 CFD1 chains. Requires [4Fe-4S] cluster as cofactor.

The protein resides in the cytoplasm. Functionally, component of the cytosolic iron-sulfur (Fe/S) protein assembly (CIA) machinery. Required for maturation of extramitochondrial Fe-S proteins. The NBP35-CFD1 heterotetramer forms a Fe-S scaffold complex, mediating the de novo assembly of an Fe-S cluster and its transfer to target apoproteins. The protein is Cytosolic Fe-S cluster assembly factor NBP35 of Chaetomium globosum (strain ATCC 6205 / CBS 148.51 / DSM 1962 / NBRC 6347 / NRRL 1970) (Soil fungus).